The chain runs to 682 residues: Potassium-transporting ATPase ATP-binding subunit (682 aa).

4 consecutive transmembrane segments (helical) span residues Val35–Gly55, Ala62–Ala82, Ile219–Ile239, and Val254–Ile274. Asp307 serves as the catalytic 4-aspartylphosphate intermediate. Residues Asp344, Glu348, Phe377–Ser384, and Lys395 each bind ATP. The Mg(2+) site is built by Asp518 and Asp522. Transmembrane regions (helical) follow at residues Phe588–Met608, Ala616–Leu636, and Ile656–Leu676.

Belongs to the cation transport ATPase (P-type) (TC 3.A.3) family. Type IA subfamily. As to quaternary structure, the system is composed of three essential subunits: KdpA, KdpB and KdpC.

The protein resides in the cell inner membrane. The enzyme catalyses K(+)(out) + ATP + H2O = K(+)(in) + ADP + phosphate + H(+). Part of the high-affinity ATP-driven potassium transport (or Kdp) system, which catalyzes the hydrolysis of ATP coupled with the electrogenic transport of potassium into the cytoplasm. This subunit is responsible for energy coupling to the transport system and for the release of the potassium ions to the cytoplasm. In Klebsiella pneumoniae (strain 342), this protein is Potassium-transporting ATPase ATP-binding subunit.